A 1012-amino-acid chain; its full sequence is Ubiquitin-activating enzyme E1 1 (1012 aa).

Residue Arg22 coordinates ATP. Position 264 is a phosphoserine (Ser264). Ala437 and Asp463 together coordinate ATP. Mg(2+)-binding residues include Asp465 and Glu468. Residues Asn471, Arg474, Lys487, Val513, Asp537, and Asn538 each coordinate ATP. Asp537 is a Mg(2+) binding site. A Glycyl lysine isopeptide (Lys-Gly) (interchain with G-Cter in ubiquitin) cross-link involves residue Lys588. Cys593 acts as the Glycyl thioester intermediate in catalysis. The residue at position 903 (Ser903) is a Phosphoserine.

This sequence belongs to the ubiquitin-activating E1 family. In terms of assembly, monomer. Interacts with the E2 ubiquitin-conjugating enzyme ubc4.

The protein localises to the cytoplasm. Its subcellular location is the nucleus. It carries out the reaction ATP + ubiquitin + [E1 ubiquitin-activating enzyme]-L-cysteine = AMP + diphosphate + S-ubiquitinyl-[E1 ubiquitin-activating enzyme]-L-cysteine.. Its pathway is protein modification; protein ubiquitination. Ubiquitin transfer between the E1 ubiquitin-activating enzyme ptr3 and E2 ubiquitin-conjugating enzyme ubc4 is enhanced by the presence of magnesium and ATP, or adenylated ubiquitin. Its function is as follows. E1 ubiquitin-activating enzyme that catalyzes the first step in ubiquitin conjugation to mark cellular proteins for degradation through the ubiquitin-proteasome system. Activates ubiquitin by first adenylating its C-terminal glycine residue with ATP, and thereafter linking this residue to the side chain of a cysteine residue in E1, yielding a ubiquitin-E1 thioester and free AMP. In Schizosaccharomyces pombe (strain 972 / ATCC 24843) (Fission yeast), this protein is Ubiquitin-activating enzyme E1 1 (ptr3).